A 329-amino-acid polypeptide reads, in one-letter code: uncharacterized protein (329 aa).

7 consecutive transmembrane segments (helical) span residues 29–49, 78–98, 120–140, 164–184, 217–237, 260–280, and 299–319; these read IVLW…AISH, VLVA…CWMG, KKWL…SLLV, WMIG…LIYL, YFFL…LLVI, FFWT…SFIV, and GSSL…LLFI.

To M.pneumoniae MPN_129.

The protein resides in the cell membrane. This is an uncharacterized protein from Mycoplasma pneumoniae (strain ATCC 29342 / M129 / Subtype 1) (Mycoplasmoides pneumoniae).